Here is a 208-residue protein sequence, read N- to C-terminus: Large ribosomal subunit protein bL25 (208 aa).

Belongs to the bacterial ribosomal protein bL25 family. CTC subfamily. As to quaternary structure, part of the 50S ribosomal subunit; part of the 5S rRNA/L5/L18/L25 subcomplex. Contacts the 5S rRNA. Binds to the 5S rRNA independently of L5 and L18.

This is one of the proteins that binds to the 5S RNA in the ribosome where it forms part of the central protuberance. The chain is Large ribosomal subunit protein bL25 from Bartonella quintana (strain Toulouse) (Rochalimaea quintana).